A 100-amino-acid chain; its full sequence is Aspartyl/glutamyl-tRNA(Asn/Gln) amidotransferase subunit C (100 aa).

The protein belongs to the GatC family. In terms of assembly, heterotrimer of A, B and C subunits.

It catalyses the reaction L-glutamyl-tRNA(Gln) + L-glutamine + ATP + H2O = L-glutaminyl-tRNA(Gln) + L-glutamate + ADP + phosphate + H(+). It carries out the reaction L-aspartyl-tRNA(Asn) + L-glutamine + ATP + H2O = L-asparaginyl-tRNA(Asn) + L-glutamate + ADP + phosphate + 2 H(+). In terms of biological role, allows the formation of correctly charged Asn-tRNA(Asn) or Gln-tRNA(Gln) through the transamidation of misacylated Asp-tRNA(Asn) or Glu-tRNA(Gln) in organisms which lack either or both of asparaginyl-tRNA or glutaminyl-tRNA synthetases. The reaction takes place in the presence of glutamine and ATP through an activated phospho-Asp-tRNA(Asn) or phospho-Glu-tRNA(Gln). This Janthinobacterium sp. (strain Marseille) (Minibacterium massiliensis) protein is Aspartyl/glutamyl-tRNA(Asn/Gln) amidotransferase subunit C.